The following is a 105-amino-acid chain: Heat shock protein HspQ (105 aa).

A disordered region spans residues Met77–Asn105.

This sequence belongs to the HspQ family.

The protein localises to the cytoplasm. In terms of biological role, involved in the degradation of certain denaturated proteins, including DnaA, during heat shock stress. The chain is Heat shock protein HspQ from Salmonella arizonae (strain ATCC BAA-731 / CDC346-86 / RSK2980).